Here is an 81-residue protein sequence, read N- to C-terminus: Photosystem I iron-sulfur center (81 aa).

4Fe-4S ferredoxin-type domains are found at residues 2 to 31 and 39 to 68; these read SHSV…MIPW and IASA…VRVY. C11, C14, C17, C21, C48, C51, C54, and C58 together coordinate [4Fe-4S] cluster.

The eukaryotic PSI reaction center is composed of at least 11 subunits. Requires [4Fe-4S] cluster as cofactor.

The protein localises to the plastid. Its subcellular location is the chloroplast thylakoid membrane. It carries out the reaction reduced [plastocyanin] + hnu + oxidized [2Fe-2S]-[ferredoxin] = oxidized [plastocyanin] + reduced [2Fe-2S]-[ferredoxin]. Apoprotein for the two 4Fe-4S centers FA and FB of photosystem I (PSI); essential for photochemical activity. FB is the terminal electron acceptor of PSI, donating electrons to ferredoxin. The C-terminus interacts with PsaA/B/D and helps assemble the protein into the PSI complex. Required for binding of PsaD and PsaE to PSI. PSI is a plastocyanin-ferredoxin oxidoreductase, converting photonic excitation into a charge separation, which transfers an electron from the donor P700 chlorophyll pair to the spectroscopically characterized acceptors A0, A1, FX, FA and FB in turn. The polypeptide is Photosystem I iron-sulfur center (Helianthus annuus (Common sunflower)).